We begin with the raw amino-acid sequence, 238 residues long: 3-deoxy-manno-octulosonate cytidylyltransferase (238 aa).

The protein belongs to the KdsB family.

Its subcellular location is the cytoplasm. It catalyses the reaction 3-deoxy-alpha-D-manno-oct-2-ulosonate + CTP = CMP-3-deoxy-beta-D-manno-octulosonate + diphosphate. It functions in the pathway nucleotide-sugar biosynthesis; CMP-3-deoxy-D-manno-octulosonate biosynthesis; CMP-3-deoxy-D-manno-octulosonate from 3-deoxy-D-manno-octulosonate and CTP: step 1/1. The protein operates within bacterial outer membrane biogenesis; lipopolysaccharide biosynthesis. Activates KDO (a required 8-carbon sugar) for incorporation into bacterial lipopolysaccharide in Gram-negative bacteria. This is 3-deoxy-manno-octulosonate cytidylyltransferase from Nitratiruptor sp. (strain SB155-2).